The sequence spans 55 residues: ATP synthase F(0) complex subunit 8 (55 aa).

The chain crosses the membrane as a helical span at residues 4–24 (LNPSPWFIILLFSWVIFMVIL).

The protein belongs to the ATPase protein 8 family. As to quaternary structure, component of the ATP synthase complex composed at least of ATP5F1A/subunit alpha, ATP5F1B/subunit beta, ATP5MC1/subunit c (homooctomer), MT-ATP6/subunit a, MT-ATP8/subunit 8, ATP5ME/subunit e, ATP5MF/subunit f, ATP5MG/subunit g, ATP5MK/subunit k, ATP5MJ/subunit j, ATP5F1C/subunit gamma, ATP5F1D/subunit delta, ATP5F1E/subunit epsilon, ATP5PF/subunit F6, ATP5PB/subunit b, ATP5PD/subunit d, ATP5PO/subunit OSCP. ATP synthase complex consists of a soluble F(1) head domain (subunits alpha(3) and beta(3)) - the catalytic core - and a membrane F(0) domain - the membrane proton channel (subunits c, a, 8, e, f, g, k and j). These two domains are linked by a central stalk (subunits gamma, delta, and epsilon) rotating inside the F1 region and a stationary peripheral stalk (subunits F6, b, d, and OSCP).

The protein resides in the mitochondrion membrane. Functionally, subunit 8, of the mitochondrial membrane ATP synthase complex (F(1)F(0) ATP synthase or Complex V) that produces ATP from ADP in the presence of a proton gradient across the membrane which is generated by electron transport complexes of the respiratory chain. ATP synthase complex consist of a soluble F(1) head domain - the catalytic core - and a membrane F(1) domain - the membrane proton channel. These two domains are linked by a central stalk rotating inside the F(1) region and a stationary peripheral stalk. During catalysis, ATP synthesis in the catalytic domain of F(1) is coupled via a rotary mechanism of the central stalk subunits to proton translocation. In vivo, can only synthesize ATP although its ATP hydrolase activity can be activated artificially in vitro. Part of the complex F(0) domain. This chain is ATP synthase F(0) complex subunit 8, found in Scyliorhinus canicula (Small-spotted catshark).